Here is a 498-residue protein sequence, read N- to C-terminus: U4/U6 small nuclear ribonucleoprotein Prp31 (498 aa).

Coiled-coil stretches lie at residues 84 to 119 and 180 to 214; these read EAAP…KYSK and DEEL…MSFI. Residues 214–332 form the Nop domain; sequence IAPNLSIIVG…IERKFDKWQE (119 aa). Positions 333–356 are disordered; it reads PPPVKQVKPLPAPLDGQRKKRGGR. A Nuclear localization signal (NLS) motif is present at residues 350-363; it reads RKKRGGRRYRKMKE.

Belongs to the PRP31 family. Identified in the spliceosome B complex. Component of the U4/U6-U5 tri-snRNP complex. Component of some MLL1/MLL complex.

It localises to the nucleus. The protein localises to the nucleus speckle. Its subcellular location is the cajal body. In terms of biological role, involved in pre-mRNA splicing as component of the spliceosome. Required for the assembly of the U4/U5/U6 tri-snRNP complex, one of the building blocks of the spliceosome. The polypeptide is U4/U6 small nuclear ribonucleoprotein Prp31 (prpf31) (Xenopus tropicalis (Western clawed frog)).